Reading from the N-terminus, the 1395-residue chain is DNA-directed RNA polymerase subunit beta' (1395 aa).

The Zn(2+) site is built by Cys-70, Cys-72, Cys-85, and Cys-88. Residues Asp-461, Asp-463, and Asp-465 each contribute to the Mg(2+) site. Zn(2+) contacts are provided by Cys-815, Cys-889, Cys-896, and Cys-899.

Belongs to the RNA polymerase beta' chain family. In terms of assembly, the RNAP catalytic core consists of 2 alpha, 1 beta, 1 beta' and 1 omega subunit. When a sigma factor is associated with the core the holoenzyme is formed, which can initiate transcription. It depends on Mg(2+) as a cofactor. Requires Zn(2+) as cofactor.

It catalyses the reaction RNA(n) + a ribonucleoside 5'-triphosphate = RNA(n+1) + diphosphate. Its function is as follows. DNA-dependent RNA polymerase catalyzes the transcription of DNA into RNA using the four ribonucleoside triphosphates as substrates. The chain is DNA-directed RNA polymerase subunit beta' from Ruthia magnifica subsp. Calyptogena magnifica.